Consider the following 87-residue polypeptide: MANHKSAEKRARQTIKKTERNRFYRTRLKNITKAVREAAANGDKNAANEALKVANKSIHAMVSRGFIKKQTASRRVSRLALLVNKIA.

The disordered stretch occupies residues 1-21; the sequence is MANHKSAEKRARQTIKKTERN.

It belongs to the bacterial ribosomal protein bS20 family.

Binds directly to 16S ribosomal RNA. This is Small ribosomal subunit protein bS20 from Campylobacter jejuni subsp. jejuni serotype O:23/36 (strain 81-176).